A 140-amino-acid chain; its full sequence is uncharacterized protein (140 aa).

Residues 1-15 (MQRQTGHMEDKKRTG) show a composition bias toward basic and acidic residues. The tract at residues 1 to 34 (MQRQTGHMEDKKRTGLESQGTENAFSDGRDGKDG) is disordered.

This is an uncharacterized protein from Gallus gallus (Chicken).